The chain runs to 446 residues: Tubulin beta-2 chain (446 aa).

GTP is bound by residues glutamine 11, glutamate 69, serine 138, glycine 142, threonine 143, glycine 144, asparagine 204, and asparagine 226. Mg(2+) is bound at residue glutamate 69. A disordered region spans residues 424 to 446; it reads QYQEATADEEGEFDEDEEGGGDE. A compositionally biased stretch (acidic residues) spans 429–446; the sequence is TADEEGEFDEDEEGGGDE.

The protein belongs to the tubulin family. In terms of assembly, dimer of alpha and beta chains. A typical microtubule is a hollow water-filled tube with an outer diameter of 25 nm and an inner diameter of 15 nM. Alpha-beta heterodimers associate head-to-tail to form protofilaments running lengthwise along the microtubule wall with the beta-tubulin subunit facing the microtubule plus end conferring a structural polarity. Microtubules usually have 13 protofilaments but different protofilament numbers can be found in some organisms and specialized cells. Mg(2+) serves as cofactor. In terms of tissue distribution, testis specific.

The protein localises to the cytoplasm. It localises to the cytoskeleton. Its function is as follows. Tubulin is the major constituent of microtubules, a cylinder consisting of laterally associated linear protofilaments composed of alpha- and beta-tubulin heterodimers. Microtubules grow by the addition of GTP-tubulin dimers to the microtubule end, where a stabilizing cap forms. Below the cap, tubulin dimers are in GDP-bound state, owing to GTPase activity of alpha-tubulin. The sequence is that of Tubulin beta-2 chain (betaTub85D) from Drosophila melanogaster (Fruit fly).